The primary structure comprises 1088 residues: Probable cellulose synthase A catalytic subunit 9 [UDP-forming] (1088 aa).

The residue at position 1 (Met-1) is an N-acetylmethionine. Over 1–283 (MNTGGRLIAG…RSSRINPYRM (283 aa)) the chain is Cytoplasmic. Zn(2+) contacts are provided by Cys-39, Cys-42, Cys-58, Cys-61, Cys-66, Cys-69, Cys-81, and Cys-84. Residues 39-85 (CKICRDEIELTDNGEPFIACNECAFPTCRPCYEYERREGNQACPQCG) form an RING-type; degenerate zinc finger. Residues 284–304 (LIFCRLAILGLFFHYRILHPV) traverse the membrane as a helical segment. Over 305 to 306 (ND) the chain is Extracellular. A helical membrane pass occupies residues 307 to 327 (AFGLWLTSVICEIWFAVSWIL). The Cytoplasmic portion of the chain corresponds to 328–871 (DQFPKWYPIE…INSVVYPWTS (544 aa)). UDP-alpha-D-glucose is bound by residues Ser-366, Lys-372, Glu-373, Asp-402, and Lys-543. Asp-402 is an active-site residue. Lys-544 and Asp-568 together coordinate Mn(2+). Asp-788 is a catalytic residue. The chain crosses the membrane as a helical span at residues 872–892 (LPLLVYCSLPAICLLTGKFIV). Residues 893–897 (PEISN) lie on the Extracellular side of the membrane. A helical membrane pass occupies residues 898-918 (YAGILFLLMFMSIAVTGILEM). Over 919–933 (QWGKIGIDDWWRNEQ) the chain is Cytoplasmic. The chain crosses the membrane as a helical span at residues 934-954 (FWVIGGVSSHLFALFQGLLKV). The Extracellular portion of the chain corresponds to 955–983 (LAGVSTNFTVTSKAADDGEFSELYIFKWT). A glycan (N-linked (GlcNAc...) asparagine) is linked at Asn-961. A helical transmembrane segment spans residues 984 to 1004 (SLLIPPTTLLIINIVGVIVGV). Residues 1005 to 1015 (SDAINNGYDSW) lie on the Cytoplasmic side of the membrane. The helical transmembrane segment at 1016 to 1036 (GPLFGRLFFALWVIVHLYPFL) threads the bilayer. At 1037 to 1045 (KGLLGKQDR) the chain is on the extracellular side. The helical transmembrane segment at 1046-1066 (VPTIILVWSILLASILTLLWV) threads the bilayer. Residues 1067-1088 (RVNPFVSKDGPVLEICGLDCLK) lie on the Cytoplasmic side of the membrane.

Belongs to the glycosyltransferase 2 family. Plant cellulose synthase subfamily. It depends on Mn(2+) as a cofactor. Zn(2+) is required as a cofactor. Expressed in young plants, stems and flowers.

The protein resides in the cell membrane. The enzyme catalyses [(1-&gt;4)-beta-D-glucosyl](n) + UDP-alpha-D-glucose = [(1-&gt;4)-beta-D-glucosyl](n+1) + UDP + H(+). Its pathway is glycan metabolism; plant cellulose biosynthesis. Functionally, probable catalytic subunit of cellulose synthase terminal complexes ('rosettes'), required for beta-1,4-glucan microfibril crystallization, a major mechanism of the cell wall formation. This chain is Probable cellulose synthase A catalytic subunit 9 [UDP-forming], found in Arabidopsis thaliana (Mouse-ear cress).